Consider the following 1894-residue polypeptide: MEQRRPWPRALEVDSRSVVLLSVVWVLLAPPAAGMPQFSTFHSENRDWTFNHLTVHQGTGAVYVGAINRVYKLTGNLTIQVAHKTGPEEDNKSCYPPLIVQPCSEVLTLTNNVNKLLIIDYSENRLLACGSLYQGVCKLLRLDDLFILVEPSHKKEHYLSSVNKTGTMYGVIVRSEGEDGKLFIGTAVDGKQDYFPTLSSRKLPRDPESSAMLDYELHSDFVSSLIKIPSDTLALVSHFDIFYIYGFASGGFVYFLTVQPETPEGVAINSAGDLFYTSRIVRLCKDDPKFHSYVSLPFGCTRAGVEYRLLQAAYLAKPGDSLAQAFNITSQDDVLFAIFSKGQKQYHHPPDDSALCAFPIRAINLQIKERLQSCYQGEGNLELNWLLGKDVQCTKAPVPIDDNFCGLDINQPLGGSTPVEGLTLYTTSRDRMTSVASYVYNGYSVVFVGTKSGKLKKIRADGPPHGGVQYEMVSVLKDGSPILRDMAFSIDQRYLYVMSERQVTRVPVESCEQYTTCGECLSSGDPHCGWCALHNMCSRRDKCQQAWEPNRFAASISQCVSLAVHPSSISVSEHSRLLSLVVSDAPDLSAGIACAFGNLTEVEGQVSGSQVICISPGPKDVPVIPLDQDWFGLELQLRSKETGKIFVSTEFKFYNCSAHQLCLSCVNSAFRCHWCKYRNLCTHDPTTCSFQEGRINISEDCPQLVPTEEILIPVGEVKPITLKARNLPQPQSGQRGYECVLNIQGAIHRVPALRFNSSSVQCQNSSYQYDGMDISNLAVDFAVVWNGNFIIDNPQDLKVHLYKCAAQRESCGLCLKADRKFECGWCSGERRCTLHQHCTSPSSPWLDWSSHNVKCSNPQITEILTVSGPPEGGTRVTIHGVNLGLDFSEIAHHVQVAGVPCTPLPGEYIIAEQIVCEMGHALVGTTSGPVRLCIGECKPEFMTKSHQQYTFVNPSVLSLNPIRGPESGGTMVTITGHYLGAGSSVAVYLGNQTCEFYGRSMSEIVCVSPPSSNGLGPVPVSVSVDRAHVDSNLQFEYIDDPRVQRIEPEWSIASGHTPLTITGFNLDVIQEPRIRVKFNGKESVNVCKVVNTTTLTCLAPSLTTDYRPGLDTVERPDEFGFVFNNVQSLLIYNDTKFIYYPNPTFELLSPTGVLDQKPGSPIILKGKNLCPPASGGAKLNYTVLIGETPCAVTVSETQLLCEPPNLTGQHKVMVHVGGMVFSPGSVSVISDSLLTLPAIVSIAAGGSLLLIIVIIVLIAYKRKSRENDLTLKRLQMQMDNLESRVALECKEAFAELQTDINELTSDLDRSGIPYLDYRTYAMRVLFPGIEDHPVLRELEVQGNGQQHVEKALKLFAQLINNKVFLLTFIRTLELQRSFSMRDRGNVASLIMTGLQGRLEYATDVLKQLLSDLIDKNLENKNHPKLLLRRTESVAEKMLTNWFAFLLHKFLKECAGEPLFMLYCAIKQQMEKGPIDAITGEARYSLSEDKLIRQQIEYKTLILNCVNPDNENSPEIPVKVLNCDTITQVKEKILDAVYKNVPYSQRPRAVDMDLEWRQGRIARVVLQDEDITTKIEGDWKRLNTLMHYQVSDRSVVALVPKQTSSYNIPASASISRTSISRYDSSFRYTGSPDSLRSRAPMITPDLESGVKVWHLVKNHDHGDQKEGDRGSKMVSEIYLTRLLATKGTLQKFVDDLFETLFSTVHRGSALPLAIKYMFDFLDEQADRHSIHDTDVRHTWKSNCLPLRFWVNVIKNPQFVFDIHKGSITDACLSVVAQTFMDSCSTSEHRLGKDSPSNKLLYAKDIPSYKSWVERYYADIAKLPAISDQDMNAYLAEQSRLHAVEFNMLSALNEIYSYVSKYSEELIGALEQDEQARRQRLAYKVEQLINAMSIES.

The signal sequence occupies residues 1–34 (MEQRRPWPRALEVDSRSVVLLSVVWVLLAPPAAG). The 474-residue stretch at 35–508 (MPQFSTFHSE…SERQVTRVPV (474 aa)) folds into the Sema domain. Residues 35–1237 (MPQFSTFHSE…VISDSLLTLP (1203 aa)) are Extracellular-facing. N-linked (GlcNAc...) asparagine glycans are attached at residues N76 and N91. Disulfide bonds link C94–C103, C129–C137, C284–C405, C300–C356, C374–C393, C511–C528, C517–C559, C520–C537, C531–C543, and C594–C613. N327 carries N-linked (GlcNAc...) asparagine glycosylation. N-linked (GlcNAc...) asparagine glycans are attached at residues N598, N696, and N756. IPT/TIG domains are found at residues 858–951 (PQIT…QYTF), 954–1037 (PSVL…QFEY), 1041–1139 (PRVQ…KFIY), and 1143–1228 (PTFE…SVSV). N-linked (GlcNAc...) asparagine glycosylation is present at N1205. Residues 1238 to 1258 (AIVSIAAGGSLLLIIVIIVLI) form a helical membrane-spanning segment. The Cytoplasmic segment spans residues 1259 to 1894 (AYKRKSREND…QLINAMSIES (636 aa)). A coiled-coil region spans residues 1261–1310 (KRKSRENDLTLKRLQMQMDNLESRVALECKEAFAELQTDINELTSDLDRS). S1612 carries the post-translational modification Phosphoserine.

The protein belongs to the plexin family. As to quaternary structure, homodimer. The PLXNA2 homodimer interacts with a SEMA6A homodimer, giving rise to a heterotetramer. Interacts directly with NRP1 and NRP2. Interacts with RND1. In terms of tissue distribution, detected in fetal brain.

Its subcellular location is the cell membrane. Its function is as follows. Coreceptor for SEMA3A and SEMA6A. Necessary for signaling by SEMA6A and class 3 semaphorins and subsequent remodeling of the cytoskeleton. Plays a role in axon guidance, invasive growth and cell migration. Class 3 semaphorins bind to a complex composed of a neuropilin and a plexin. The plexin modulates the affinity of the complex for specific semaphorins, and its cytoplasmic domain is required for the activation of down-stream signaling events in the cytoplasm. The sequence is that of Plexin-A2 (PLXNA2) from Homo sapiens (Human).